The chain runs to 100 residues: Dromyosuppressin (100 aa).

Positions 1-24 (MSFAQFFVACCLAIVLLAVSNTRA) are cleaved as a signal peptide. The propeptide occupies 25–84 (AVQGPPLCQSGIVEEMPPHIRKVCQALENSDQLTSALKSYINNEASALVANSDDLLKNYN). Residue Phe-96 is modified to Phenylalanine amide.

It belongs to the myosuppressin family.

It localises to the secreted. Myoinhibiting neuropeptide. The chain is Dromyosuppressin from Drosophila melanogaster (Fruit fly).